Here is a 1250-residue protein sequence, read N- to C-terminus: DNA-directed RNA polymerase subunit beta'' (1250 aa).

The Zn(2+) site is built by C224, C314, C321, and C324.

The protein belongs to the RNA polymerase beta' chain family. RpoC2 subfamily. In terms of assembly, in plastids the minimal PEP RNA polymerase catalytic core is composed of four subunits: alpha, beta, beta', and beta''. When a (nuclear-encoded) sigma factor is associated with the core the holoenzyme is formed, which can initiate transcription. Zn(2+) serves as cofactor.

It localises to the plastid. The protein resides in the chloroplast. It carries out the reaction RNA(n) + a ribonucleoside 5'-triphosphate = RNA(n+1) + diphosphate. DNA-dependent RNA polymerase catalyzes the transcription of DNA into RNA using the four ribonucleoside triphosphates as substrates. The protein is DNA-directed RNA polymerase subunit beta'' of Staurastrum punctulatum (Green alga).